The primary structure comprises 284 residues: Signal peptidase I (284 aa).

A helical transmembrane segment spans residues 4–22 (NFPLLLVIAVAVCGALALV). The Cytoplasmic portion of the chain corresponds to 23 to 58 (DLVLFAPRRRAAISSYEGQVNEPDPAVLEKLNKEPL). Residues 59 to 77 (LVEYGKSFFPVLFIVLVLR) traverse the membrane as a helical segment. At 78–284 (SFLVEPFQIP…PNFSRVGVIH (207 aa)) the chain is on the periplasmic side. Residues Ser-90 and Lys-145 contribute to the active site.

It belongs to the peptidase S26 family.

The protein resides in the cell inner membrane. It catalyses the reaction Cleavage of hydrophobic, N-terminal signal or leader sequences from secreted and periplasmic proteins.. The chain is Signal peptidase I (lepB) from Pseudomonas aeruginosa (strain ATCC 15692 / DSM 22644 / CIP 104116 / JCM 14847 / LMG 12228 / 1C / PRS 101 / PAO1).